The sequence spans 494 residues: Paired box protein Pax-2-B (494 aa).

A DNA-binding region (paired) is located at residues 15-141 (RHGGVNQLGG…SSINRIIRTK (127 aa)). The segment at 18-74 (GVNQLGGVFVNGRPLPDVVRQRIVELAHQGVRPCDISRQLRVSHGCVSKILGRYYET) is PAI subdomain. Positions 93–141 (KVVDKIADYKRQNPTMFAWEIRDRLLAEGICDNDTVPSVSSINRIIRTK) are RED subdomain. The interval 142–221 (VQQPFHPTPD…GDSQSSVESL (80 aa)) is disordered. A compositionally biased stretch (low complexity) spans 163–175 (VPSTASPPVSSAS).

As to expression, expression becomes spatially localized at mid-gastrula stages and is localized to the nervous system (midbrain, hindbrain, spinal cord), sensory organs (optic vesicle and stalk, otic vesicle), visceral arches, developing excretory system (pronephros, pronephric duct, rectal diverticulum, proctodaeum) and thryoid gland. Splicing does not appear to be tissue-specific.

Its subcellular location is the nucleus. Its function is as follows. Probable transcription factor. Involved in kidney development, acting synergistically with lhx1/lim-1 in pronephric morphogenesis during the tailbud stages. This is Paired box protein Pax-2-B (pax2-b) from Xenopus laevis (African clawed frog).